The chain runs to 255 residues: Ribosomal RNA small subunit methyltransferase A (255 aa).

N13, L15, G40, E61, D85, and N103 together coordinate S-adenosyl-L-methionine.

This sequence belongs to the class I-like SAM-binding methyltransferase superfamily. rRNA adenine N(6)-methyltransferase family. RsmA subfamily.

It is found in the cytoplasm. It catalyses the reaction adenosine(1518)/adenosine(1519) in 16S rRNA + 4 S-adenosyl-L-methionine = N(6)-dimethyladenosine(1518)/N(6)-dimethyladenosine(1519) in 16S rRNA + 4 S-adenosyl-L-homocysteine + 4 H(+). Functionally, specifically dimethylates two adjacent adenosines (A1518 and A1519) in the loop of a conserved hairpin near the 3'-end of 16S rRNA in the 30S particle. May play a critical role in biogenesis of 30S subunits. In Dechloromonas aromatica (strain RCB), this protein is Ribosomal RNA small subunit methyltransferase A.